The primary structure comprises 59 residues: Alpha-conotoxin CIA (59 aa).

An N-terminal signal peptide occupies residues Met1–Ser16. A propeptide spanning residues Phe17–Arg42 is cleaved from the precursor. 2 disulfides stabilise this stretch: Cys46–Cys51 and Cys47–Cys57. Position 57 is a cysteine amide (Cys57).

It belongs to the conotoxin A superfamily. Expressed by the venom duct.

It localises to the secreted. Alpha-conotoxins act on postsynaptic membranes, they bind to the nicotinic acetylcholine receptors (nAChR) and thus inhibit them. This toxin blocks the rat muscle nAChRs alpha-1-beta-1-gamma-delta (CHRNA1-CHRNB1-CHRNG-CHRND) (IC(50)=5.7 nM) and the rat neuronal nAChR alpha-3-beta-2/CHRNA3-CHRNB2 (IC(50)=2060 nM). In vivo, intramuscular injection into zebrafish produces rapid flaccid paralysis. In Conus catus (Cat cone), this protein is Alpha-conotoxin CIA.